A 346-amino-acid chain; its full sequence is MAMVSEFLKQAWFIENEEQEYVQTVKSSKGGPGSAVSPYPTFNPSSDVAALHKAIMVKGVDEATIIDILTKRNNAQRQQIKAAYLQETGKPLDETLKKALTGHLEEVVLALLKTPAQFDADELRAAMKGLGTDEDTLIEILASRTNKEIRDINRVYREELKRDLAKDITSDTSGDFRNALLSLAKGDRSEDFGVNEDLADSDARALYEAGERRKGTDVNVFNTILTTRSYPQLRRVFQKYTKYSKHDMNKVLDLELKGDIEKCLTAIVKCATSKPAFFAEKLHQAMKGVGTRHKALIRIMVSRSEIDMNDIKAFYQKMYGISLCQAILDETKGDYEKILVALCGGN.

Ala-2 carries the N-acetylalanine modification. At Ser-5 the chain carries Phosphoserine; by TRPM7. An Isoglutamyl lysine isopeptide (Gln-Lys) (interchain with K-?) cross-link involves residue Gln-19. Position 21 is a phosphotyrosine; by EGFR (Tyr-21). Phosphoserine; by PKC is present on Ser-27. Residues Ser-34 and Ser-37 each carry the phosphoserine modification. A Phosphothreonine modification is found at Thr-41. Annexin repeat units follow at residues Phe-42–Lys-113, Thr-114–Lys-185, Asp-197–Lys-269, and Ser-273–Gly-344. The residue at position 58 (Lys-58) is an N6-acetyllysine. Ca(2+) is bound by residues Gly-59, Val-60, Glu-62, Lys-97, Leu-100, Glu-105, Met-127, Gly-129, Gly-131, Thr-132, and Glu-134. The residue at position 136 (Thr-136) is a Phosphothreonine. Ca(2+)-binding residues include Asp-171, Gly-210, and Arg-213. Lys-214 is covalently cross-linked (Glycyl lysine isopeptide (Lys-Gly) (interchain with G-Cter in SUMO1); alternate). Lys-214 is covalently cross-linked (Glycyl lysine isopeptide (Lys-Gly) (interchain with G-Cter in SUMO2); alternate). Gly-215 is a Ca(2+) binding site. Lys-239 carries the N6-acetyllysine modification. Ca(2+) contacts are provided by Asp-253, Glu-255, and Leu-256. Lys-257 is covalently cross-linked (Glycyl lysine isopeptide (Lys-Gly) (interchain with G-Cter in SUMO1)). Positions 261, 286, 288, and 290 each coordinate Ca(2+). Lys-312 is subject to N6-acetyllysine. A disulfide bridge links Cys-324 with Cys-343. 3 residues coordinate Ca(2+): Leu-328, Glu-330, and Thr-331. Lys-332 participates in a covalent cross-link: Glycyl lysine isopeptide (Lys-Gly) (interchain with G-Cter in SUMO1). Ca(2+) is bound at residue Glu-336.

Belongs to the annexin family. Homodimer; non-covalently linked. Homodimer; linked by transglutamylation. Homodimers linked by transglutamylation are observed in placenta, but not in other tissues. Interacts with S100A11. Heterotetramer, formed by two molecules each of S100A11 and ANXA1. Interacts with DYSF. Interacts with EGFR. In terms of processing, phosphorylated by protein kinase C, EGFR and TRPM7. Phosphorylated in response to EGF treatment. Post-translationally, sumoylated. Proteolytically cleaved by cathepsin CTSG to release the active N-terminal peptide Ac2-26. As to expression, detected in resting neutrophils. Detected in peripheral blood T-cells. Detected in extracellular vesicles in blood serum from patients with inflammatory bowel disease, but not in serum from healthy donors. Detected in placenta (at protein level). Detected in liver.

It is found in the nucleus. Its subcellular location is the cytoplasm. It localises to the cell projection. The protein resides in the cilium. The protein localises to the cell membrane. It is found in the membrane. Its subcellular location is the endosome membrane. It localises to the basolateral cell membrane. The protein resides in the apical cell membrane. The protein localises to the lateral cell membrane. It is found in the secreted. Its subcellular location is the extracellular space. It localises to the extracellular exosome. The protein resides in the cytoplasmic vesicle. The protein localises to the secretory vesicle lumen. It is found in the phagocytic cup. Its subcellular location is the early endosome. It localises to the cytoplasmic vesicle membrane. Plays important roles in the innate immune response as effector of glucocorticoid-mediated responses and regulator of the inflammatory process. Has anti-inflammatory activity. Plays a role in glucocorticoid-mediated down-regulation of the early phase of the inflammatory response. Contributes to the adaptive immune response by enhancing signaling cascades that are triggered by T-cell activation, regulates differentiation and proliferation of activated T-cells. Promotes the differentiation of T-cells into Th1 cells and negatively regulates differentiation into Th2 cells. Has no effect on unstimulated T cells. Negatively regulates hormone exocytosis via activation of the formyl peptide receptors and reorganization of the actin cytoskeleton. Has high affinity for Ca(2+) and can bind up to eight Ca(2+) ions. Displays Ca(2+)-dependent binding to phospholipid membranes. Plays a role in the formation of phagocytic cups and phagosomes. Plays a role in phagocytosis by mediating the Ca(2+)-dependent interaction between phagosomes and the actin cytoskeleton. Functionally, functions at least in part by activating the formyl peptide receptors and downstream signaling cascades. Promotes chemotaxis of granulocytes and monocytes via activation of the formyl peptide receptors. Promotes rearrangement of the actin cytoskeleton, cell polarization and cell migration. Promotes resolution of inflammation and wound healing. Acts via neutrophil N-formyl peptide receptors to enhance the release of CXCL2. The polypeptide is Annexin A1 (ANXA1) (Homo sapiens (Human)).